A 728-amino-acid polypeptide reads, in one-letter code: Polyribonucleotide nucleotidyltransferase (728 aa).

Aspartate 503 and aspartate 509 together coordinate Mg(2+). Residues 570 to 629 form the KH domain; that stretch reads PRLTTIKIPSDCIGMVIGKGGETIRGITEETGAEINIADDGTVTIACTTKEGTDAALATI. The 75-residue stretch at 639–713 folds into the S1 motif domain; the sequence is GNIYVGKVRD…GKTKFALSIK (75 aa).

It belongs to the polyribonucleotide nucleotidyltransferase family. Mg(2+) is required as a cofactor.

The protein localises to the cytoplasm. The enzyme catalyses RNA(n+1) + phosphate = RNA(n) + a ribonucleoside 5'-diphosphate. Its function is as follows. Involved in mRNA degradation. Catalyzes the phosphorolysis of single-stranded polyribonucleotides processively in the 3'- to 5'-direction. The polypeptide is Polyribonucleotide nucleotidyltransferase (Chlorobium chlorochromatii (strain CaD3)).